The primary structure comprises 418 residues: tRNA-2-methylthio-N(6)-dimethylallyladenosine synthase (418 aa).

Residues 1-118 (MNYLIETIGC…ALKIMNLFRT (118 aa)) form the MTTase N-terminal domain. Cys-10, Cys-46, Cys-80, Cys-143, Cys-147, and Cys-150 together coordinate [4Fe-4S] cluster. The 228-residue stretch at 129–356 (IKSKIVRYIT…LKESNKISIE (228 aa)) folds into the Radical SAM core domain. One can recognise a TRAM domain in the interval 359 to 418 (SEMLGSTQQVLAEEIKNGIIKARTKNGRKVFAEGRKEYIGKHINVNIKEAKINSLFGDIV).

Belongs to the methylthiotransferase family. MiaB subfamily. As to quaternary structure, monomer. Requires [4Fe-4S] cluster as cofactor.

It localises to the cytoplasm. It catalyses the reaction N(6)-dimethylallyladenosine(37) in tRNA + (sulfur carrier)-SH + AH2 + 2 S-adenosyl-L-methionine = 2-methylsulfanyl-N(6)-dimethylallyladenosine(37) in tRNA + (sulfur carrier)-H + 5'-deoxyadenosine + L-methionine + A + S-adenosyl-L-homocysteine + 2 H(+). Functionally, catalyzes the methylthiolation of N6-(dimethylallyl)adenosine (i(6)A), leading to the formation of 2-methylthio-N6-(dimethylallyl)adenosine (ms(2)i(6)A) at position 37 in tRNAs that read codons beginning with uridine. This chain is tRNA-2-methylthio-N(6)-dimethylallyladenosine synthase, found in Endomicrobium trichonymphae.